The chain runs to 539 residues: Tripartite motif-containing protein 26 (539 aa).

The RING-type zinc finger occupies 16–57 (CSICLDYLRDPVTIDCGHVFCRSCTTDVRPISGSRPVCPLCK). The B box-type zinc-finger motif lies at 97 to 138 (QDAKLCERHREKLHYYCEDDGKLLCVMCRESREHRPHTAVLM). 4 residues coordinate Zn(2+): C102, H105, C124, and H130. The stretch at 188–227 (IVAEFEQGHQFLREREEHLLEQLAKLEQELTEGREKFKSR) forms a coiled coil. The B30.2/SPRY domain occupies 295-539 (RGLREFQGKL…WPGTRLLLRP (245 aa)). Residues 376–437 (REGWSEDEEE…EEEEEVLESC (62 aa)) form a disordered region. Residues 380–434 (SEDEEEGDEEEEGEEEEEEEEAGYGDGYDDWETDEDEESLGDEEEEEEEEEEEVL) show a composition bias toward acidic residues.

The protein belongs to the TRIM/RBCC family. Interacts with TBK1; this interaction bridges together TBK1 and NEMO in order to activate TBK1. Interacts with INCA1. In terms of processing, autoubiquitinates upon viral infection. In turn, autoubiquitinated TRIM26 recruits NEMO and bridges TBK1-NEMO interaction.

Its subcellular location is the cytoplasm. It localises to the nucleus. The enzyme catalyses S-ubiquitinyl-[E2 ubiquitin-conjugating enzyme]-L-cysteine + [acceptor protein]-L-lysine = [E2 ubiquitin-conjugating enzyme]-L-cysteine + N(6)-ubiquitinyl-[acceptor protein]-L-lysine.. In terms of biological role, E3 ubiquitin-protein ligase which regulates the IFN-beta production and antiviral response downstream of various DNA-encoded pattern-recognition receptors (PRRs). Also plays a central role in determining the response to different forms of oxidative stress by controlling levels of DNA glycosylases NEIL1, NEIL3 and NTH1 that are involved in repair of damaged DNA. Promotes nuclear IRF3 ubiquitination and proteasomal degradation. Bridges together TBK1 and NEMO during the innate response to viral infection leading to the activation of TBK1. Positively regulates LPS-mediated inflammatory innate immune response by catalyzing the 'Lys-11'-linked polyubiquitination of TAB1 to enhance its activation and subsequent NF-kappa-B and MAPK signaling. In a manner independent of its catalytic activity, inhibits WWP2, a SOX2-directed E3 ubiquitin ligase, and thus protects SOX2 from polyubiquitination and proteasomal degradation. Ubiquitinates the histone acetyltransferase protein complex component PHF20 and thereby triggers its degradation in the nucleus after its recruitment by the histone demethylase KDM6B, serving as a scaffold protein. Upon induction by TGF-beta, ubiquitinates the TFIID component TAF7 for proteasomal degradation. Induces ferroptosis by ubiquitinating SLC7A11, a critical protein for lipid reactive oxygen species (ROS) scavenging. The sequence is that of Tripartite motif-containing protein 26 (TRIM26) from Pan troglodytes (Chimpanzee).